The chain runs to 85 residues: UPF0386 protein Plav_1374 (85 aa).

It belongs to the UPF0386 family.

This is UPF0386 protein Plav_1374 from Parvibaculum lavamentivorans (strain DS-1 / DSM 13023 / NCIMB 13966).